Consider the following 487-residue polypeptide: L-tartrate/succinate antiporter (487 aa).

Transmembrane regions (helical) follow at residues 10-30, 33-53, 54-74, 93-113, 137-157, 189-209, 236-256, 292-312, 313-333, 340-360, 370-390, 393-413, 418-438, and 465-485; these read YLAP…AGLE, TWLY…EPVP, GAVV…WLLF, WAVS…FMFG, TLFL…VTPS, IGSY…AIFL, FLGM…LAYV, LMVG…AAMV, GYSV…DIVS, VFFW…TGFI, SLSG…FYLL, FFAS…AAAL, IPLP…SILT, and IFGL…MPVV.

The protein belongs to the SLC13A/DASS transporter (TC 2.A.47) family. DIT1 subfamily.

It localises to the cell inner membrane. The catalysed reaction is (2R,3R)-tartrate(out) + succinate(in) = (2R,3R)-tartrate(in) + succinate(out). Its function is as follows. Catalyzes the uptake of tartrate in exchange for intracellular succinate. Essential for anaerobic L-tartrate fermentation. This chain is L-tartrate/succinate antiporter (ttdT), found in Escherichia coli O157:H7.